We begin with the raw amino-acid sequence, 308 residues long: Cytochrome b (308 aa).

4 consecutive transmembrane segments (helical) span residues 1-21, 45-66, 81-101, and 146-166; these read FGSL…LLAT, WLIR…YLHI, WNTG…GYVL, and FFAL…VHLT. His-51 and His-65 together coordinate heme b. His-150 and His-164 together coordinate heme b. His-169 provides a ligand contact to a ubiquinone. The next 3 membrane-spanning stretches (helical) occupy residues 194–214, 256–276, and 288–308; these read MKDI…ALFS, LGGV…PLLH, and LSQI…WVGS.

It belongs to the cytochrome b family. In terms of assembly, the cytochrome bc1 complex contains 11 subunits: 3 respiratory subunits (MT-CYB, CYC1 and UQCRFS1), 2 core proteins (UQCRC1 and UQCRC2) and 6 low-molecular weight proteins (UQCRH/QCR6, UQCRB/QCR7, UQCRQ/QCR8, UQCR10/QCR9, UQCR11/QCR10 and a cleavage product of UQCRFS1). This cytochrome bc1 complex then forms a dimer. Heme b serves as cofactor.

Its subcellular location is the mitochondrion inner membrane. In terms of biological role, component of the ubiquinol-cytochrome c reductase complex (complex III or cytochrome b-c1 complex) that is part of the mitochondrial respiratory chain. The b-c1 complex mediates electron transfer from ubiquinol to cytochrome c. Contributes to the generation of a proton gradient across the mitochondrial membrane that is then used for ATP synthesis. The polypeptide is Cytochrome b (MT-CYB) (Amblyornis macgregoriae (Macgregor's bowerbird)).